The chain runs to 230 residues: TPR repeat-containing protein BB_0298 (230 aa).

2 TPR repeats span residues 69–102 and 183–216; these read ARFF…NPNN and FEFL…ASTE.

The chain is TPR repeat-containing protein BB_0298 from Borreliella burgdorferi (strain ATCC 35210 / DSM 4680 / CIP 102532 / B31) (Borrelia burgdorferi).